Here is a 228-residue protein sequence, read N- to C-terminus: Ribonuclease HII (228 aa).

Positions Gly11–Met202 constitute an RNase H type-2 domain. A divalent metal cation-binding residues include Asp17, Glu18, and Asp111.

Belongs to the RNase HII family. It depends on Mn(2+) as a cofactor. Mg(2+) is required as a cofactor.

The protein localises to the cytoplasm. It catalyses the reaction Endonucleolytic cleavage to 5'-phosphomonoester.. Functionally, endonuclease that specifically degrades the RNA of RNA-DNA hybrids. The polypeptide is Ribonuclease HII (Saccharopolyspora erythraea (strain ATCC 11635 / DSM 40517 / JCM 4748 / NBRC 13426 / NCIMB 8594 / NRRL 2338)).